The following is a 273-amino-acid chain: Undecaprenyl-diphosphatase (273 aa).

7 consecutive transmembrane segments (helical) span residues 13 to 35 (GLVE…VFGN), 45 to 62 (VFEI…VFEY), 82 to 102 (FVLN…LFDK), 108 to 128 (LFNP…ILWV), 186 to 206 (TEFS…YDVL), 219 to 239 (LILI…KALL), and 250 to 270 (FAYY…SGWI).

The protein belongs to the UppP family.

The protein localises to the cell inner membrane. The enzyme catalyses di-trans,octa-cis-undecaprenyl diphosphate + H2O = di-trans,octa-cis-undecaprenyl phosphate + phosphate + H(+). Catalyzes the dephosphorylation of undecaprenyl diphosphate (UPP). Confers resistance to bacitracin. In Neisseria gonorrhoeae (strain ATCC 700825 / FA 1090), this protein is Undecaprenyl-diphosphatase.